The chain runs to 126 residues: MSLKKEEVLDAISEMSVMDIMQLISMIEKKFGVSAASSHISSVENVVTESESTQVEQTEFTVILSSIGGNKIPVIKAVRSITGLGLKEAKDLVESAPVTLKESVSKDDADNLKKTLESVGASVEIK.

This sequence belongs to the bacterial ribosomal protein bL12 family. As to quaternary structure, homodimer. Part of the ribosomal stalk of the 50S ribosomal subunit. Forms a multimeric L10(L12)X complex, where L10 forms an elongated spine to which 2 to 4 L12 dimers bind in a sequential fashion. Binds GTP-bound translation factors.

Functionally, forms part of the ribosomal stalk which helps the ribosome interact with GTP-bound translation factors. Is thus essential for accurate translation. This chain is Large ribosomal subunit protein bL12, found in Blochmanniella floridana.